The sequence spans 102 residues: MYAIIKHSGKQYKVSVGDELKLDHFEAESKASIEVSEVLAINDKELKVGAPFVAGAKVVLEVINHGKDKKVVIYKKRRRKDSKLKRGFRRQFTRVVVKDIKA.

Belongs to the bacterial ribosomal protein bL21 family. In terms of assembly, part of the 50S ribosomal subunit. Contacts protein L20.

This protein binds to 23S rRNA in the presence of protein L20. The chain is Large ribosomal subunit protein bL21 from Campylobacter jejuni subsp. jejuni serotype O:6 (strain 81116 / NCTC 11828).